The primary structure comprises 164 residues: Cyclin-dependent kinase inhibitor 1 (164 aa).

Serine 2 carries the post-translational modification N-acetylserine. Residue serine 2 forms a Glycyl serine ester (Ser-Gly) (interchain with G-Cter in ubiquitin) linkage. The segment at 13-41 (HGSKACRRLFGPVDSEQLRRDCDALMAGC) adopts a C4-type zinc-finger fold. The required for binding cyclins stretch occupies residues 17–24 (ACRRLFGP). Residues 53 to 58 (FVTETP) form a required for binding CDKs region. Positions 80–164 (AGPRGGRDDL…RRLIFSKRKP (85 aa)) are disordered. Serine 114 is subject to Phosphoserine; by GSK3-beta. Serine 130 carries the post-translational modification Phosphoserine. The PIP-box K+4 motif motif lies at 140–164 (RKRRQTSMTDFYHSKRRLIFSKRKP). The short motif at 141–156 (KRRQTSMTDFYHSKRR) is the Nuclear localization signal element. Phosphothreonine; by PKA, PKB/AKT1, PIM1 and PIM2 is present on threonine 145. At serine 146 the chain carries Phosphoserine; by PKC and NUAK1. The interval 152-164 (HSKRRLIFSKRKP) is interaction with TRIM39. Positions 153 to 164 (SKRRLIFSKRKP) are enriched in basic residues. Serine 160 carries the phosphoserine modification.

This sequence belongs to the CDI family. In terms of assembly, interacts with HDAC1; the interaction is prevented by competitive binding of C10orf90/FATS to HDAC1 facilitating acetylation and protein stabilization of CDKN1A/p21. Interacts with MKRN1. Interacts with PSMA3. Interacts with PCNA. Component of the ternary complex, cyclin D-CDK4-CDKN1A. Interacts (via its N-terminal domain) with CDK4; the interaction promotes the assembly of the cyclin D-CDK4 complex, its nuclear translocation and promotes the cyclin D-dependent enzyme activity of CDK4. Binding to CDK2 leads to CDK2/cyclin E inactivation at the G1-S phase DNA damage checkpoint, thereby arresting cells at the G1-S transition during DNA repair. Interacts with PIM1. Interacts with STK11 and NUAK1. Interacts with DTL and TRIM39. Interacts with PKP3; the interaction sequesters CDKN1A to the cytoplasm thereby repressing its role as an inhibitor of CDK4- and CDK6-driven RB1 phosphorylation. In terms of processing, phosphorylation of Thr-145 by Akt or of Ser-146 by PKC impairs binding to PCNA. Phosphorylation at Ser-114 by GSK3-beta enhances ubiquitination by the DCX(DTL) complex. Phosphorylation of Thr-145 by PIM2 enhances protein stability and inhibits cell proliferation. Phosphorylation of Thr-145 by PIM1 results in the relocation of CDKN1A to the cytoplasm and enhanced CDKN1A protein stability. UV radiation-induced phosphorylation at Ser-146 by NUAK1 leads to its degradation. Post-translationally, ubiquitinated by MKRN1; leading to polyubiquitination and 26S proteasome-dependent degradation. Ubiquitinated by the DCX(DTL) complex, also named CRL4(CDT2) complex, leading to its degradation during S phase or following UV irradiation. Ubiquitination by the DCX(DTL) complex is essential to control replication licensing and is PCNA-dependent: interacts with PCNA via its PIP-box, while the presence of the containing the 'K+4' motif in the PIP box, recruit the DCX(DTL) complex, leading to its degradation. Ubiquitination at Ser-2 leads to degradation by the proteasome pathway. Ubiquitinated by RNF114; leading to proteasomal degradation. Acetylation leads to protein stability. Acetylated in vitro on Lys-141, Lys-154, Lys-161 and Lys-163. Deacetylation by HDAC1 is prevented by competitive binding of C10orf90/FATS to HDAC1.

Its subcellular location is the cytoplasm. It localises to the nucleus. Its function is as follows. May be involved in p53/TP53 mediated inhibition of cellular proliferation in response to DNA damage. Binds to and inhibits cyclin-dependent kinase activity, preventing phosphorylation of critical cyclin-dependent kinase substrates and blocking cell cycle progression. Functions in the nuclear localization and assembly of cyclin D-CDK4 complex and promotes its kinase activity towards RB1. At higher stoichiometric ratios, inhibits the kinase activity of the cyclin D-CDK4 complex. Inhibits DNA synthesis by DNA polymerase delta by competing with POLD3 for PCNA binding. Plays an important role in controlling cell cycle progression and DNA damage-induced G2 arrest. Negatively regulates the CDK4- and CDK6-driven phosphorylation of RB1 in keratinocytes, thereby resulting in the release of E2F1 and subsequent transcription of E2F1-driven G1/S phase promoting genes. The protein is Cyclin-dependent kinase inhibitor 1 (CDKN1A) of Felis catus (Cat).